Here is a 475-residue protein sequence, read N- to C-terminus: METTVTAVSGTTSSSVGHGAGGGAARVLLLPSPGAQGHTNPMLQLGRRLAYHGLRPTLVATRYVLSTTPAPGAPFDVAAISDGFDAGGMALCPDPAEYFSRLEAVGSETLRELLLSEARAGRPVRVLVYDAHLAWARRVAQASGVAAAAFFSQPCSVDVVYGELWAGRLALPATDGRALLARGVLGVELGLEDMPPFAAVPESQPAFLQVSVGQFEGLDYADDVLVNSFRDIEPKEVEYMELTWRAKMVGPTLPSYYLGDGRLPSNKSYGFDLFNSDVECMDWLEKQMNSSVVLVSYGTVSNYDATQLEELGNGLCNSSKPFLWVVRSNEEHKLSEELKEKCGKIGLIVSWCPQLEVLAHRAIGCFVTHCGWNSTLEALVNGVPFVGIPHWADQPTIAKYVESAWGMGVRARKNKNGCLKKEEVERCIREVMDGERKDEYKKNAMNWMQKAKEAMQEGGSSDKHVAEFATKYSSI.

Positions 1–17 are enriched in low complexity; that stretch reads METTVTAVSGTTSSSVG. A disordered region spans residues 1-20; sequence METTVTAVSGTTSSSVGHGA. UDP-alpha-D-glucose-binding positions include His-38, Ser-152, Thr-299, Cys-352, 369–377, and 393–394; these read HCGWNSTLE and DQ.

This sequence belongs to the UDP-glycosyltransferase family.

Functionally, involved in the detoxification of the Fusarium mycotoxin deoxynivalenol by the transfer of glucose from UDP-D-glucose to the hydroxyl group at C-3, forming deoxynivalenol-3-O-beta-D-glucoside. This Hordeum vulgare subsp. vulgare (Domesticated barley) protein is UDP-glucosyltransferase UGT13248.